The chain runs to 356 residues: MTSQASAPKIPQLWVPLPSGIHPSWREIDQGSAAWLDRFGLYSDHAQRERLTRISVGEITGRGGPDGRLAALQWTADFLMWLFAFDDEYCDEGPAAASPDATLLIITKLQRIVEVPWAAPADDNYSAALLELRLRLDDLTTPVQTARWAASFRAYLQGQIWMAANSTYGRIPTLSDHLAVRLDSSGVKIFSTLSEIIHGYDLPAADYDRHDVRGFVEVFAAIIGWSNDLVSYHKERRRSQDSYGNVVDLIAHERQCSVEEAVSETATMHTRAMALYLRLRDQILRDAEPELRKWITDCDSWIRADYDWSLTTHRYVNPDDPADLPVGSAEAPFRAREADQPLPIASVSWWWTLLKD.

Mg(2+) is bound by residues Asp-86 and Asp-91. The short motif at 86-91 (DDEYCD) is the DDXXXD motif element. Position 181 (Arg-181) interacts with substrate. The Mg(2+) site is built by Asn-227 and Ser-231. Lys-234 contributes to the substrate binding site. Glu-235 provides a ligand contact to Mg(2+). 314-315 (RY) is a substrate binding site.

The protein belongs to the terpene synthase family. It depends on Mg(2+) as a cofactor.

The catalysed reaction is (2E,6E)-farnesyl diphosphate + H2O = (+)-(1(10)E,4E,6S,7R)-germacradien-6-ol + diphosphate. Its pathway is secondary metabolite biosynthesis; terpenoid biosynthesis. Functionally, catalyzes the conversion of (2E,6E)-farnesyl diphosphate (FPP) to yield the sesquiterpene (+)-(1(10)E,4E,6S,7R)-germacradien-6-ol via a putative 1,10-cyclization, which could require the abstraction of the pyrophosphate from FPP to yield the (E,E)-germacradienyl cation. The only accepted substrate is farnesyl diphosphate (FPP). In Streptomyces pratensis (strain ATCC 33331 / IAF-45CD), this protein is (+)-(1(10)E,4E,6S,7R)-germacradien-6-ol synthase.